The sequence spans 842 residues: MKRWVSLDSGESEDPLPEDTCPDLLDGDSNAKPPPAKPHIFSTAKSRSRLFGKGDSEETSPMDCSYEEGELAPCPAITVSSVIIVQRSGDGPTCARQLSQDSVAAAGAEKPLKLYDRRRIFEAVAQNNCQELESLLCFLQRSKKRLTDSEFKDPETGKTCLLKAMLNLHSGQNDTIPLLLEIARQTDSLKEFVNASYTDSYYKGQTALHIAIERRNMALVTLLVENGADVQAAANGDFFKKTKGRPGFYFGELPLSLAACTNQLAIVKFLLQNSWQPADISARDSVGNTVLHALVEVADNTPDNTKFVTSMYNEILILGAKLHPTLKLEELINKKGLTPLALAAGSGKIGVLAYILQREILEPECRHLSRKFTEWAYGPVHSSLYDLSCIDTCERNSVLEVIAYSSSETPNRHDMLLVEPLNRLLQDKWDRVVKRIFYFNFFVYCLYMIIFTTAAYYRPVDGLPPYKLRNLPGDYFRVTGEILSVAGGVYFFFRGIQYFLQRRPSMKALFVDSYSEMLFFVQALFMLATVVLYFSHCKEYVATMVFSLALGWINMLYYTRGFQQMGIYAVMIEKMILRDLCRFMFVYLVFLFGFSTAVVTLIEDGKNSSTSAESTSHRWRGFGCRSSDSSYNSLYSTCLELFKFTIGMGDLEFTENYDFKAVFIILLLAYVILTYILLLNMLIALMGETVNKIAQESKSIWKLQRAITILDTEKGFLKCMRKAFRSGKLLQVGYTPDGKDDCRWCFRVDEVNWTTWNTNVGIINEDPGNCEGVKRTLSFSLRSGRVSGRNWKNFALVPLLRDASTRDRHPXPPEDVHLRPFVGSLKPGDAELFKDSVAAAEK.

The disordered stretch occupies residues 1-64; the sequence is MKRWVSLDSG…DSEETSPMDC (64 aa). The Cytoplasmic segment spans residues 1 to 435; that stretch reads MKRWVSLDSG…QDKWDRVVKR (435 aa). Positions 10–21 are enriched in acidic residues; the sequence is GESEDPLPEDTC. An ANK 1 repeat occupies 113 to 141; that stretch reads KLYDRRRIFEAVAQNNCQELESLLCFLQR. Arg118 lines the ATP pocket. At Thr147 the chain carries Phosphothreonine; by PKA; in vitro. An ANK 2 repeat occupies 156–188; that stretch reads TGKTCLLKAMLNLHSGQNDTIPLLLEIARQTDS. ATP contacts are provided by residues Lys158, Lys163, Asn167, 202-205, and 213-214; these read YKGQ and ER. 4 ANK repeats span residues 206–231, 252–279, 288–324, and 338–361; these read TALH…ADVQ, ELPL…QPAD, NTVL…KLHP, and TPLA…REIL. The residue at position 373 (Thr373) is a Phosphothreonine; by PKA; in vitro. The ANK 7 repeat unit spans residues 396–418; the sequence is NSVLEVIAYSSSETPNRHDMLLV. Residues 436–457 traverse the membrane as a helical segment; it reads IFYFNFFVYCLYMIIFTTAAYY. The Extracellular portion of the chain corresponds to 458–475; sequence RPVDGLPPYKLRNLPGDY. The helical transmembrane segment at 476–500 threads the bilayer; it reads FRVTGEILSVAGGVYFFFRGIQYFL. The Cytoplasmic segment spans residues 501–513; it reads QRRPSMKALFVDS. Ser505 bears the Phosphoserine; by PKC/PRKCE mark. 514-515 lines the resiniferatoxin pocket; sequence YS. The chain crosses the membrane as a helical span at residues 514 to 535; it reads YSEMLFFVQALFMLATVVLYFS. The Extracellular segment spans residues 536-538; that stretch reads HCK. The chain crosses the membrane as a helical span at residues 539-559; it reads EYVATMVFSLALGWINMLYYT. A resiniferatoxin-binding site is contributed by Arg560. Residues 560–562 are Cytoplasmic-facing; it reads RGF. Residues 563-601 traverse the membrane as a helical segment; the sequence is QQMGIYAVMIEKMILRDLCRFMFVYLVFLFGFSTAVVTL. The Extracellular segment spans residues 602–633; that stretch reads IEDGKNSSTSAESTSHRWRGFGCRSSDSSYNS. The N-linked (GlcNAc...) asparagine glycan is linked to Asn607. Positions 634–655 form an intramembrane region, pore-forming; sequence LYSTCLELFKFTIGMGDLEFTE. Gly647 serves as a coordination point for Na(+). Residues 647-650 carry the Selectivity filter motif; sequence GMGD. Asp650 serves as a coordination point for Ca(2+). Residues 656 to 659 are Extracellular-facing; sequence NYDF. A helical transmembrane segment spans residues 660 to 686; that stretch reads KAVFIILLLAYVILTYILLLNMLIALM. At 687–842 the chain is on the cytoplasmic side; that stretch reads GETVNKIAQE…FKDSVAAAEK (156 aa). The tract at residues 688-716 is AD; the sequence is ETVNKIAQESKSIWKLQRAITILDTEKGF. Thr708 is subject to Phosphothreonine. The tract at residues 771–805 is interaction with calmodulin; the sequence is EGVKRTLSFSLRSGRVSGRNWKNFALVPLLRDAST. Ser778 carries the post-translational modification Phosphoserine. The required for PIP2-mediated channel inhibition stretch occupies residues 781 to 796; that stretch reads LRSGRVSGRNWKNFAL. Residue Ser804 is modified to Phosphoserine; by PKC/PRKCE and PKC/PRKCZ. At Ser824 the chain carries Phosphoserine.

Belongs to the transient receptor (TC 1.A.4) family. TrpV subfamily. TRPV1 sub-subfamily. As to quaternary structure, homotetramer. Interacts with PIRT. May also form a heteromeric channel with TRPV3. Interacts with CALM, PRKCM and CSK. Interacts with PRKCG and NTRK1, probably by forming a trimeric complex. Interacts with the Scolopendra mutilans RhTx toxin. Interacts with TMEM100. Interacts with PACS2. Post-translationally, phosphorylation by PKA reverses capsaicin-induced dephosphorylation at multiple sites. Phosphorylation by CAMKII seems to regulate binding to vanilloids. Phosphorylated and modulated by PRKCE, PRKCM and probably PRKCZ. Dephosphorylation by calcineurin seems to lead to receptor desensitization and phosphorylation by CAMKII recovers activity.

The protein resides in the postsynaptic cell membrane. The protein localises to the cell projection. Its subcellular location is the dendritic spine membrane. It localises to the cell membrane. It carries out the reaction Ca(2+)(in) = Ca(2+)(out). The enzyme catalyses Mg(2+)(in) = Mg(2+)(out). The catalysed reaction is Na(+)(in) = Na(+)(out). It catalyses the reaction K(+)(in) = K(+)(out). Its activity is regulated as follows. The channel is sensitized by ATP binding. Repeated stimulation with capsaicin gives rise to progressively smaller responses, due to desensitization. This desensitization is triggered by the influx of calcium ions and is inhibited by elevated ATP levels. Ca(2+) and CALM displace ATP from its binding site and trigger a conformation change that leads to a closed, desensitized channel. The double-knot toxin (DkTx) from the Chinese earth tiger tarantula activates the channel and traps it in an open conformation. The Scolopendra mutilans RhTx toxin potentiates the heat activation pathway mediated by this channel by binding to the charge-rich outer pore region (in an activated state). Channel activity is activated via the interaction with PIRT and phosphatidylinositol 4,5-bisphosphate (PIP2). Both PIRT and PIP2 are required to activate channel activity. Intracellular PIP2 inhibits desensitization. Its function is as follows. Non-selective calcium permeant cation channel involved in detection of noxious chemical and thermal stimuli. Seems to mediate proton influx and may be involved in intracellular acidosis in nociceptive neurons. Involved in mediation of inflammatory pain and hyperalgesia. Sensitized by a phosphatidylinositol second messenger system activated by receptor tyrosine kinases, which involves PKC isozymes and PCL. Activation by vanilloids, like capsaicin, and temperatures higher than 42 degrees Celsius. Upon activation, exhibits a time- and Ca(2+)-dependent outward rectification, followed by a long-lasting refractory state. Mild extracellular acidic pH (6.5) potentiates channel activation by noxious heat and vanilloids, whereas acidic conditions (pH &lt;6) directly activate the channel. Can be activated by endogenous compounds, including 12-hydroperoxytetraenoic acid and bradykinin. Acts as ionotropic endocannabinoid receptor with central neuromodulatory effects. Triggers a form of long-term depression (TRPV1-LTD) mediated by the endocannabinoid anandamine in the hippocampus and nucleus accumbens by affecting AMPA receptors endocytosis. The chain is Transient receptor potential cation channel subfamily V member 1 (Trpv1) from Oryctolagus cuniculus (Rabbit).